A 1000-amino-acid polypeptide reads, in one-letter code: Chromosome transmission fidelity protein 18 homolog (1000 aa).

Disordered regions lie at residues 53–89 (SAGD…RDAS), 130–159 (AGNS…DSKF), and 272–301 (EFGE…SHSL). The segment covering 60–70 (SNANSKPTGDS) has biased composition (polar residues). Residues 272–295 (EFGENDSEILENDDNAGEEDDEDE) show a composition bias toward acidic residues. An ATP-binding site is contributed by 396–403 (GPPGLGKT). Residues 888–898 (ARNAGRDNTTA) are compositionally biased toward polar residues. Residues 888 to 916 (ARNAGRDNTTAAAAVKTADPKGAKSAAKP) are disordered.

The protein belongs to the activator 1 small subunits family. CTF18 subfamily. Component of the CTF18-RFC complex, which consists of ctf18, ctf8, dcc1, rfc2, rfc3, rfc4 and rfc5. The CTF18-RFC complex associates with pcna.

Its subcellular location is the nucleus. In terms of biological role, chromosome cohesion factor involved in sister chromatid cohesion and fidelity of chromosome transmission. Component of one of the cell nuclear antigen loader complexes, CTF18-replication factor C (CTF18-RFC), which consists of ctf18, ctf8, dcc1, rfc2, rfc3, rfc4 and rfc5. The CTF18-RFC complex binds to single-stranded and primed DNAs and has weak ATPase activity that is stimulated by the presence of primed DNA, replication protein A (RPA) and by proliferating cell nuclear antigen (pcna). The CTF18-RFC complex catalyzes the ATP-dependent loading of pcna onto primed and gapped DNA. This is Chromosome transmission fidelity protein 18 homolog (chtf18) from Xenopus laevis (African clawed frog).